The chain runs to 183 residues: uncharacterized protein (183 aa).

The next 4 membrane-spanning stretches (helical) occupy residues 13 to 35 (KALL…LTYS), 60 to 82 (LLIL…KLRF), 117 to 139 (FEPV…YAIF), and 149 to 171 (LLFY…LYLS).

It is found in the cell membrane. This is an uncharacterized protein from Archaeoglobus fulgidus (strain ATCC 49558 / DSM 4304 / JCM 9628 / NBRC 100126 / VC-16).